Reading from the N-terminus, the 175-residue chain is Type-2 ice-structuring protein (175 aa).

A signal peptide spans 1-16 (MLAALLVCAMVALTRA). The propeptide occupies 17–33 (ANGDTGKEAVMTGSSGK). The region spanning 36 to 163 (TECPTDWKMF…LHASVCAKPA (128 aa)) is the C-type lectin domain. 5 disulfides stabilise this stretch: Cys38/Cys49, Cys66/Cys159, Cys103/Cys134, Cys123/Cys145, and Cys135/Cys151.

The protein localises to the secreted. Functionally, antifreeze proteins lower the blood freezing point. This chain is Type-2 ice-structuring protein, found in Osmerus mordax (Rainbow smelt).